The primary structure comprises 434 residues: Glutamate-1-semialdehyde 2,1-aminomutase (434 aa).

K267 carries the post-translational modification N6-(pyridoxal phosphate)lysine.

The protein belongs to the class-III pyridoxal-phosphate-dependent aminotransferase family. HemL subfamily. Homodimer. Requires pyridoxal 5'-phosphate as cofactor.

It is found in the cytoplasm. It catalyses the reaction (S)-4-amino-5-oxopentanoate = 5-aminolevulinate. It functions in the pathway porphyrin-containing compound metabolism; protoporphyrin-IX biosynthesis; 5-aminolevulinate from L-glutamyl-tRNA(Glu): step 2/2. The protein operates within porphyrin-containing compound metabolism; chlorophyll biosynthesis. This is Glutamate-1-semialdehyde 2,1-aminomutase from Roseiflexus castenholzii (strain DSM 13941 / HLO8).